A 492-amino-acid polypeptide reads, in one-letter code: Vacuolar fusion protein CCZ1 homolog (492 aa).

The tract at residues 255 to 275 (SVHAGPTSSSSNGTASVERPL) is disordered. Polar residues predominate over residues 260-269 (PTSSSSNGTA).

This sequence belongs to the CCZ1 family. As to quaternary structure, interacts with MON1.

Its subcellular location is the endosome. The protein localises to the prevacuolar compartment. Its function is as follows. Plays an important role in membrane trafficking through the secretory apparatus. In complex with MON1, acts as a guanine exchange factor (GEF) for Rab7 protein family. Promotes the exchange of GDP to GTP, converting it from an inactive GDP-bound form into an active GTP-bound form. The active form is involved in protein trafficking from prevacuolar compartments (PVCs) to vacuoles. May serve as a linker between Rab5 and Rab7 protein families in PVCs and mediate PVC maturation. The chain is Vacuolar fusion protein CCZ1 homolog from Oryza sativa subsp. japonica (Rice).